Reading from the N-terminus, the 229-residue chain is tRNA (guanosine(18)-2'-O)-methyltransferase (229 aa).

S-adenosyl-L-methionine-binding residues include T96, I139, and L148.

The protein belongs to the class IV-like SAM-binding methyltransferase superfamily. RNA methyltransferase TrmH family.

It catalyses the reaction guanosine(18) in tRNA + S-adenosyl-L-methionine = 2'-O-methylguanosine(18) in tRNA + S-adenosyl-L-homocysteine + H(+). Functionally, catalyzes the 2'-O methylation of guanosine at position 18 in tRNA. The protein is tRNA (guanosine(18)-2'-O)-methyltransferase of Escherichia coli O157:H7.